A 351-amino-acid chain; its full sequence is UPF0764 protein C16orf89 homolog (351 aa).

A signal peptide spans 1–25; that stretch reads MKSLKMLYPLFMLLVLSSKIDLSNQ.

Belongs to the UPF0764 family. As to quaternary structure, homodimer.

Its subcellular location is the secreted. The polypeptide is UPF0764 protein C16orf89 homolog (Danio rerio (Zebrafish)).